A 391-amino-acid chain; its full sequence is Elongation factor Tu (391 aa).

Residues 10–201 (KPHVNIGTIG…AVDAYIPTPE (192 aa)) form the tr-type G domain. The interval 19 to 26 (GHVDHGKT) is G1. 19–26 (GHVDHGKT) serves as a coordination point for GTP. Position 26 (T26) interacts with Mg(2+). The interval 55–59 (GITIS) is G2. The G3 stretch occupies residues 76–79 (DCPG). Residues 76–80 (DCPGH) and 131–134 (NKVD) each bind GTP. A G4 region spans residues 131 to 134 (NKVD). The segment at 169–171 (SAL) is G5.

Belongs to the TRAFAC class translation factor GTPase superfamily. Classic translation factor GTPase family. EF-Tu/EF-1A subfamily. As to quaternary structure, monomer.

The protein resides in the cytoplasm. It catalyses the reaction GTP + H2O = GDP + phosphate + H(+). Functionally, GTP hydrolase that promotes the GTP-dependent binding of aminoacyl-tRNA to the A-site of ribosomes during protein biosynthesis. This Rhizobium meliloti (strain 1021) (Ensifer meliloti) protein is Elongation factor Tu.